A 623-amino-acid polypeptide reads, in one-letter code: Phosphatidylinositol-3-phosphatase SAC1 (623 aa).

The Cytoplasmic portion of the chain corresponds to 1–523 (MTGPIVYVQN…SPFPDRRPVY (523 aa)). The region spanning 115–454 (LELHLKNSTF…ADAVSVAYSG (340 aa)) is the SAC domain. Glycyl lysine isopeptide (Lys-Gly) (interchain with G-Cter in ubiquitin) cross-links involve residues K246 and K358. The chain crosses the membrane as a helical span at residues 524 to 544 (IQLIPMIICAALTVLGATIFF). At 545 to 552 (PKDRFTSS) the chain is on the lumenal side. The chain crosses the membrane as a helical span at residues 553-573 (KNLLYFAGASIVLALSTKFMF). The Cytoplasmic segment spans residues 574-623 (KNGIQFVNWPKLVDVGFLVVHQTHDKEQQFKGLKYAQSPKFSKPDPLKRD).

In terms of assembly, component of the SPOTS complex, at least composed of LCB1/2 (LCB1 and/or LCB2), ORM1/2 (ORM1 and/or ORM2), SAC1 and TSC3.

It is found in the endoplasmic reticulum membrane. It localises to the golgi apparatus membrane. The catalysed reaction is a 1,2-diacyl-sn-glycero-3-phospho-(1D-myo-inositol-3-phosphate) + H2O = a 1,2-diacyl-sn-glycero-3-phospho-(1D-myo-inositol) + phosphate. The enzyme catalyses a 1,2-diacyl-sn-glycero-3-phospho-(1D-myo-inositol 4-phosphate) + H2O = a 1,2-diacyl-sn-glycero-3-phospho-(1D-myo-inositol) + phosphate. Phosphoinositide phosphatase which catalyzes the hydrolysis of phosphatidylinositol 3-phosphate (PtdIns(3)P) and phosphatidylinositol 4-phosphate (PtdIns(4)P). Has low activity towards phosphatidylinositol-3,5-bisphosphate (PtdIns(3,5)P2). May be involved in the coordination of the activities of the secretory pathway and the actin cytoskeleton. The polypeptide is Phosphatidylinositol-3-phosphatase SAC1 (SAC1) (Saccharomyces cerevisiae (strain ATCC 204508 / S288c) (Baker's yeast)).